The sequence spans 140 residues: Myrosinase 2 (140 aa).

R70 serves as the catalytic Nucleophile. Residues N114 and N127 are each glycosylated (N-linked (GlcNAc...) asparagine).

This sequence belongs to the glycosyl hydrolase 1 family. As to quaternary structure, homodimer.

It catalyses the reaction a thioglucoside + H2O = a sugar + a thiol.. Its activity is regulated as follows. Inhibited by ascorbate. Functionally, degradation of glucosinolates (glucose residue linked by a thioglucoside bound to an amino acid derivative) to glucose, sulfate and any of the products: thiocyanates, isothiocyanates, nitriles, epithionitriles or oxazolidine-2-thiones. This is Myrosinase 2 from Brevicoryne brassicae (Mealy cabbage aphid).